We begin with the raw amino-acid sequence, 99 residues long: Aspartyl/glutamyl-tRNA(Asn/Gln) amidotransferase subunit C (99 aa).

This sequence belongs to the GatC family. Heterotrimer of A, B and C subunits.

The enzyme catalyses L-glutamyl-tRNA(Gln) + L-glutamine + ATP + H2O = L-glutaminyl-tRNA(Gln) + L-glutamate + ADP + phosphate + H(+). It carries out the reaction L-aspartyl-tRNA(Asn) + L-glutamine + ATP + H2O = L-asparaginyl-tRNA(Asn) + L-glutamate + ADP + phosphate + 2 H(+). In terms of biological role, allows the formation of correctly charged Asn-tRNA(Asn) or Gln-tRNA(Gln) through the transamidation of misacylated Asp-tRNA(Asn) or Glu-tRNA(Gln) in organisms which lack either or both of asparaginyl-tRNA or glutaminyl-tRNA synthetases. The reaction takes place in the presence of glutamine and ATP through an activated phospho-Asp-tRNA(Asn) or phospho-Glu-tRNA(Gln). The polypeptide is Aspartyl/glutamyl-tRNA(Asn/Gln) amidotransferase subunit C (Burkholderia vietnamiensis (strain G4 / LMG 22486) (Burkholderia cepacia (strain R1808))).